The primary structure comprises 165 residues: Regulatory protein RecX (165 aa).

It belongs to the RecX family.

The protein localises to the cytoplasm. Modulates RecA activity. The protein is Regulatory protein RecX of Cronobacter sakazakii (strain ATCC BAA-894) (Enterobacter sakazakii).